We begin with the raw amino-acid sequence, 202 residues long: Large ribosomal subunit protein bL25 (202 aa).

A disordered region spans residues 1–21; that stretch reads MSKESYELKAEARERVGKGSS.

This sequence belongs to the bacterial ribosomal protein bL25 family. CTC subfamily. As to quaternary structure, part of the 50S ribosomal subunit; part of the 5S rRNA/L5/L18/L25 subcomplex. Contacts the 5S rRNA. Binds to the 5S rRNA independently of L5 and L18.

In terms of biological role, this is one of the proteins that binds to the 5S RNA in the ribosome where it forms part of the central protuberance. In Agrobacterium fabrum (strain C58 / ATCC 33970) (Agrobacterium tumefaciens (strain C58)), this protein is Large ribosomal subunit protein bL25.